The primary structure comprises 451 residues: Tubulin alpha chain (451 aa).

Gln-11 provides a ligand contact to GTP. Lys-40 is subject to N6-acetyllysine. 6 residues coordinate GTP: Glu-71, Gly-144, Thr-145, Thr-179, Asn-206, and Asn-228. Glu-71 is a Mg(2+) binding site. The active site involves Glu-254.

It belongs to the tubulin family. In terms of assembly, dimer of alpha and beta chains. A typical microtubule is a hollow water-filled tube with an outer diameter of 25 nm and an inner diameter of 15 nM. Alpha-beta heterodimers associate head-to-tail to form protofilaments running lengthwise along the microtubule wall with the beta-tubulin subunit facing the microtubule plus end conferring a structural polarity. Microtubules usually have 13 protofilaments but different protofilament numbers can be found in some organisms and specialized cells. Requires Mg(2+) as cofactor. Undergoes a tyrosination/detyrosination cycle, the cyclic removal and re-addition of a C-terminal tyrosine residue by the enzymes tubulin tyrosine carboxypeptidase (TTCP) and tubulin tyrosine ligase (TTL), respectively. In terms of processing, acetylation of alpha chains at Lys-40 stabilizes microtubules and affects affinity and processivity of microtubule motors. This modification has a role in multiple cellular functions, ranging from cell motility, cell cycle progression or cell differentiation to intracellular trafficking and signaling.

The protein localises to the cytoplasm. It is found in the cytoskeleton. It carries out the reaction GTP + H2O = GDP + phosphate + H(+). Its function is as follows. Tubulin is the major constituent of microtubules, a cylinder consisting of laterally associated linear protofilaments composed of alpha- and beta-tubulin heterodimers. Microtubules grow by the addition of GTP-tubulin dimers to the microtubule end, where a stabilizing cap forms. Below the cap, tubulin dimers are in GDP-bound state, owing to GTPase activity of alpha-tubulin. This Trypanosoma cruzi protein is Tubulin alpha chain.